The chain runs to 429 residues: Ribosomal protein uS12 methylthiotransferase RimO (429 aa).

Positions 2-118 constitute an MTTase N-terminal domain; it reads HNIFLLSLGC…VLRAIGAEYR (117 aa). Residues C11, C47, C81, C142, C146, and C149 each contribute to the [4Fe-4S] cluster site. The region spanning 128-357 is the Radical SAM core domain; it reads LTPPHYAFLK…MELQETISQE (230 aa). The region spanning 360–427 is the TRAM domain; it reads REFEGNEIVV…PYDLEGEVIG (68 aa).

The protein belongs to the methylthiotransferase family. RimO subfamily. [4Fe-4S] cluster is required as a cofactor.

It is found in the cytoplasm. The catalysed reaction is L-aspartate(89)-[ribosomal protein uS12]-hydrogen + (sulfur carrier)-SH + AH2 + 2 S-adenosyl-L-methionine = 3-methylsulfanyl-L-aspartate(89)-[ribosomal protein uS12]-hydrogen + (sulfur carrier)-H + 5'-deoxyadenosine + L-methionine + A + S-adenosyl-L-homocysteine + 2 H(+). Catalyzes the methylthiolation of an aspartic acid residue of ribosomal protein uS12. The sequence is that of Ribosomal protein uS12 methylthiotransferase RimO from Chlorobium limicola (strain DSM 245 / NBRC 103803 / 6330).